Reading from the N-terminus, the 227-residue chain is A-type potassium channel modulatory protein KCNIP1 (227 aa).

In terms of domain architecture, EF-hand 1; degenerate spans 38 to 94 (LEMTMVCHRPEGLEQLEAQTNFTKRELQVLYRGFKNECPSGVVNEETFKQIYAQFFP). 3 EF-hand domains span residues 97-132 (DASTYAHYLFNAFDTTQTGSVKFEDFVTALSILLRG), 133-168 (TVHEKLRWTFNLYDINKDGYINKEEMMDIVKAIYDM), and 181-216 (TPRQHVDVFFQKMDKNKDGIVTLDEFLESCQEDDNI). Ca(2+) is bound by residues D146, N148, D150, Y152, E157, D194, N196, D198, and E205. The interval 214-227 (DNIMRSLQLFQNVM) is interaction with KCND2.

Belongs to the recoverin family. As to quaternary structure, component of heteromultimeric potassium channels. Identified in potassium channel complexes containing KCND1, KCND2, KCND3, KCNIP1, KCNIP2, KCNIP3, KCNIP4, DPP6 and DPP10. Part of a heterooctamer composed of the tetrameric channel and four KCNIP1 chains. Probably part of a complex consisting of KCNIP1, KCNIP2 isoform 3 and KCND2. Self-associates to form homodimers and homotetramers. Interacts with KCNIP2 isoform 3 in a calcium-dependent manner. Interacts with KCND2; this interaction mediates the capture of both the N- and C-terminus of KCND2, thus preventing KCND2 N-type inactivation and modulates the channel gating kinetics. Interacts with KCND3; each KCNIP1 monomer interacts with two adjacent KCND3 subunits, through both the N-terminal inactivation ball of a KCND3 subunit and a C-terminal helix from the adjacent KCND3 subunit, clamping them together; this interaction stabilizes the tetrameric form and modulates the channel gating kinetics namely channel activation and inactivation kinetics and rate of recovery from inactivation. In terms of tissue distribution, expressed in brain. Found in a subpopulation of neurons widely distributed and enriched in Purkinje cells of the cerebellum and in the reticular thalamic and medial habenular nuclei.

It localises to the cell membrane. It is found in the cytoplasm. The protein resides in the cell projection. Its subcellular location is the dendrite. In terms of biological role, regulatory subunit of Kv4/D (Shal)-type voltage-gated rapidly inactivating A-type potassium channels. Regulates channel density, inactivation kinetics and rate of recovery from inactivation in a calcium-dependent and isoform-specific manner. Modulates KCND2/Kv4.2 currents. In vitro, modulates KCND1/Kv4.1 currents. Increases the presence of KCND2 at the cell surface. In Mus musculus (Mouse), this protein is A-type potassium channel modulatory protein KCNIP1.